The chain runs to 333 residues: Ribosomal RNA small subunit methyltransferase H (333 aa).

S-adenosyl-L-methionine is bound by residues 39 to 41 (GGY), D57, F84, D101, and Q108.

The protein belongs to the methyltransferase superfamily. RsmH family.

It is found in the cytoplasm. It carries out the reaction cytidine(1402) in 16S rRNA + S-adenosyl-L-methionine = N(4)-methylcytidine(1402) in 16S rRNA + S-adenosyl-L-homocysteine + H(+). In terms of biological role, specifically methylates the N4 position of cytidine in position 1402 (C1402) of 16S rRNA. The protein is Ribosomal RNA small subunit methyltransferase H of Dinoroseobacter shibae (strain DSM 16493 / NCIMB 14021 / DFL 12).